A 41-amino-acid chain; its full sequence is Photosystem I reaction center subunit IX (41 aa).

Residues 7–27 (YLSVAPVLSTLWFGALAGLLI) form a helical membrane-spanning segment.

Belongs to the PsaJ family.

It is found in the plastid. The protein resides in the chloroplast thylakoid membrane. Functionally, may help in the organization of the PsaE and PsaF subunits. This is Photosystem I reaction center subunit IX from Jasminum nudiflorum (Winter jasmine).